We begin with the raw amino-acid sequence, 364 residues long: MRTDLFDFHLPPENIALRPASPREAARMLVVQGDGVLRDRTIGDLPDWLEPGDQLVVNDTKVIAAQLSGRRISRETEAKIEATLIKRLDGSRWQALVRPAKKLLAGDTIRFGNEGKVCLLGHLDATVEAKGEEGEVTLSFVFHGPALDQAIADLGRPPLPPYIAGKRPADEQDAQDYQTMFAAKEGAVAAPTAGLHFTPALEQRLRARGVGLQRVTLHVGAGTFLPVKVEDTEGHRMHAEWGSLTPETAAALNQAKAEGGRIVAVGTTSMRLLESAALPDGTIAPFEAETSIFITPGYRFRAVDILMTNFHLPRSTLFMLVSAFAGLETMQAAYAHAIESGYRFYSYGDACLLFRQPDERVVEP.

The protein belongs to the QueA family. Monomer.

The protein localises to the cytoplasm. It catalyses the reaction 7-aminomethyl-7-carbaguanosine(34) in tRNA + S-adenosyl-L-methionine = epoxyqueuosine(34) in tRNA + adenine + L-methionine + 2 H(+). The protein operates within tRNA modification; tRNA-queuosine biosynthesis. Transfers and isomerizes the ribose moiety from AdoMet to the 7-aminomethyl group of 7-deazaguanine (preQ1-tRNA) to give epoxyqueuosine (oQ-tRNA). The protein is S-adenosylmethionine:tRNA ribosyltransferase-isomerase of Bradyrhizobium sp. (strain ORS 278).